The chain runs to 311 residues: Tyrosine recombinase XerD (311 aa).

One can recognise a Core-binding (CB) domain in the interval 3–88 (DMSAAYVEAF…ALRQFYKFLY (86 aa)). Positions 109–298 (TLPKTLSIED…LEERLHDLVQ (190 aa)) constitute a Tyr recombinase domain. Catalysis depends on residues R156, K180, H250, R253, and H276. Y285 serves as the catalytic O-(3'-phospho-DNA)-tyrosine intermediate.

It belongs to the 'phage' integrase family. XerD subfamily. In terms of assembly, forms a cyclic heterotetrameric complex composed of two molecules of XerC and two molecules of XerD.

The protein resides in the cytoplasm. Functionally, site-specific tyrosine recombinase, which acts by catalyzing the cutting and rejoining of the recombining DNA molecules. The XerC-XerD complex is essential to convert dimers of the bacterial chromosome into monomers to permit their segregation at cell division. It also contributes to the segregational stability of plasmids. This Rhizobium meliloti (strain 1021) (Ensifer meliloti) protein is Tyrosine recombinase XerD.